A 196-amino-acid chain; its full sequence is N-(5'-phosphoribosyl)anthranilate isomerase (196 aa).

It belongs to the TrpF family.

It carries out the reaction N-(5-phospho-beta-D-ribosyl)anthranilate = 1-(2-carboxyphenylamino)-1-deoxy-D-ribulose 5-phosphate. Its pathway is amino-acid biosynthesis; L-tryptophan biosynthesis; L-tryptophan from chorismate: step 3/5. The chain is N-(5'-phosphoribosyl)anthranilate isomerase from Nitratiruptor sp. (strain SB155-2).